We begin with the raw amino-acid sequence, 405 residues long: Tryptophan synthase beta chain (405 aa).

Lysine 98 is subject to N6-(pyridoxal phosphate)lysine.

It belongs to the TrpB family. As to quaternary structure, tetramer of two alpha and two beta chains. It depends on pyridoxal 5'-phosphate as a cofactor.

It carries out the reaction (1S,2R)-1-C-(indol-3-yl)glycerol 3-phosphate + L-serine = D-glyceraldehyde 3-phosphate + L-tryptophan + H2O. It participates in amino-acid biosynthesis; L-tryptophan biosynthesis; L-tryptophan from chorismate: step 5/5. Its function is as follows. The beta subunit is responsible for the synthesis of L-tryptophan from indole and L-serine. The chain is Tryptophan synthase beta chain from Methylococcus capsulatus (strain ATCC 33009 / NCIMB 11132 / Bath).